Here is a 103-residue protein sequence, read N- to C-terminus: Small ribosomal subunit protein uS10 (103 aa).

The protein belongs to the universal ribosomal protein uS10 family. In terms of assembly, part of the 30S ribosomal subunit.

Functionally, involved in the binding of tRNA to the ribosomes. The chain is Small ribosomal subunit protein uS10 from Sulfurovum sp. (strain NBC37-1).